The sequence spans 108 residues: Peptidyl-prolyl cis-trans isomerase FKBP1B (108 aa).

In terms of domain architecture, PPIase FKBP-type spans 20-108; the sequence is GQTCVVHYTG…IFDVELLNLE (89 aa).

As to quaternary structure, identified in a complex composed of RYR2, FKBP1B, PKA catalytic subunit, PRKAR2A, AKAP6, and the protein phosphatases PP2A and PP1. Interacts directly with RYR2.

The protein localises to the cytoplasm. It localises to the sarcoplasmic reticulum. It carries out the reaction [protein]-peptidylproline (omega=180) = [protein]-peptidylproline (omega=0). Its activity is regulated as follows. Inhibited by both FK506 and rapamycin. Has the potential to contribute to the immunosuppressive and toxic effects of FK506 and rapamycin. PPIases accelerate the folding of proteins. It catalyzes the cis-trans isomerization of proline imidic peptide bonds in oligopeptides. This Bos taurus (Bovine) protein is Peptidyl-prolyl cis-trans isomerase FKBP1B (FKBP1B).